The sequence spans 147 residues: Hemoglobin subunit beta (147 aa).

V2 carries the N-acetylvaline modification. Residues H3 to H147 enclose the Globin domain. Position 13 is a phosphothreonine (T13). S45 bears the Phosphoserine mark. K60 bears the N6-acetyllysine mark. H64 serves as a coordination point for heme b. K83 carries the post-translational modification N6-acetyllysine. H93 serves as a coordination point for heme b. S-nitrosocysteine is present on C94. K145 carries the post-translational modification N6-acetyllysine.

This sequence belongs to the globin family. As to quaternary structure, heterotetramer of two alpha chains and two beta chains. Red blood cells.

In terms of biological role, involved in oxygen transport from the lung to the various peripheral tissues. The chain is Hemoglobin subunit beta (HBB) from Colobus polykomos (Western black-and-white colobus monkey).